We begin with the raw amino-acid sequence, 341 residues long: N-acetyl-gamma-glutamyl-phosphate reductase (341 aa).

The active site involves cysteine 147.

It belongs to the NAGSA dehydrogenase family. Type 1 subfamily.

It is found in the cytoplasm. It carries out the reaction N-acetyl-L-glutamate 5-semialdehyde + phosphate + NADP(+) = N-acetyl-L-glutamyl 5-phosphate + NADPH + H(+). It participates in amino-acid biosynthesis; L-arginine biosynthesis; N(2)-acetyl-L-ornithine from L-glutamate: step 3/4. Catalyzes the NADPH-dependent reduction of N-acetyl-5-glutamyl phosphate to yield N-acetyl-L-glutamate 5-semialdehyde. The polypeptide is N-acetyl-gamma-glutamyl-phosphate reductase (Dehalococcoides mccartyi (strain ATCC BAA-2100 / JCM 16839 / KCTC 5957 / BAV1)).